We begin with the raw amino-acid sequence, 59 residues long: Large ribosomal subunit protein bL32c (59 aa).

A disordered region spans residues 37-59 (SRSFSSGNEHPKPKGFSGQQTNK).

Belongs to the bacterial ribosomal protein bL32 family.

Its subcellular location is the plastid. The protein resides in the chloroplast. In Hordeum vulgare (Barley), this protein is Large ribosomal subunit protein bL32c.